A 271-amino-acid polypeptide reads, in one-letter code: GPN-loop GTPase 3 (271 aa).

GTP is bound at residue 13–18; it reads GVGKST. The Gly-Pro-Asn (GPN)-loop; involved in dimer interface motif lies at 70–72; the sequence is GPN. 173–176 contacts GTP; sequence SKMD.

This sequence belongs to the GPN-loop GTPase family. Heterodimers with GPN1 or GPN2. Binds to RNA polymerase II (RNAPII).

In terms of biological role, small GTPase required for proper nuclear import of RNA polymerase II and III (RNAPII and RNAPIII). May act at an RNAP assembly step prior to nuclear import. The polypeptide is GPN-loop GTPase 3 (Yarrowia lipolytica (strain CLIB 122 / E 150) (Yeast)).